Consider the following 397-residue polypeptide: Ubiquitin-like modifier-activating enzyme 5 (397 aa).

Gly77, Asp98, Lys121, Asn144, and Asn178 together coordinate ATP. Positions 220 and 223 each coordinate Zn(2+). Catalysis depends on Cys244, which acts as the Glycyl thioester intermediate. Cys297 and Cys302 together coordinate Zn(2+).

It belongs to the ubiquitin-activating E1 family. UBA5 subfamily.

Functionally, E1-like enzyme which activates UFM1. The chain is Ubiquitin-like modifier-activating enzyme 5 from Culex quinquefasciatus (Southern house mosquito).